The primary structure comprises 428 residues: Immunoglobulin superfamily containing leucine-rich repeat protein (428 aa).

Positions 1-18 (MRALCLLCWAVLLNLVRA) are cleaved as a signal peptide. One can recognise an LRRNT domain in the interval 19–50 (CPEPCDCGEKYGFQIADCAYRDLEGVPPGFPA). A glycan (N-linked (GlcNAc...) asparagine) is linked at Asn51. LRR repeat units follow at residues 51-72 (NVTT…AFRE), 75-98 (LLQS…APLS), 99-122 (HLKS…HNLS), 123-144 (ALQL…AFSS), and 147-168 (ALRS…TFAP). Residues 180–231 (NPFDCTCGIVWFKTWALASAVSIPEQDNIACTTPHVLKGIPLGRLPPLPCSA) enclose the LRRCT domain. The Ig-like domain maps to 232-343 (PSVQLSYQPS…GSAESSVNVA (112 aa)). An intrachain disulfide couples Cys257 to Cys327. A glycan (N-linked (GlcNAc...) asparagine) is linked at Asn309.

Detected in thyroid, heart, retina and spinal cord.

The protein localises to the secreted. This chain is Immunoglobulin superfamily containing leucine-rich repeat protein (Islr), found in Mus musculus (Mouse).